The sequence spans 75 residues: UPF0291 protein lin1342 (75 aa).

The segment at 55–75 (IDPKGNDVTPHKIKQMRKNKK) is disordered. The span at 65–75 (HKIKQMRKNKK) shows a compositional bias: basic residues.

The protein belongs to the UPF0291 family.

Its subcellular location is the cytoplasm. This chain is UPF0291 protein lin1342, found in Listeria innocua serovar 6a (strain ATCC BAA-680 / CLIP 11262).